The primary structure comprises 272 residues: NAD kinase (272 aa).

The Proton acceptor role is filled by D50. NAD(+)-binding positions include 50–51 (DG), 126–127 (NE), R152, D154, 165–170 (TAYNKS), and A189.

The protein belongs to the NAD kinase family. A divalent metal cation serves as cofactor.

The protein resides in the cytoplasm. It catalyses the reaction NAD(+) + ATP = ADP + NADP(+) + H(+). Functionally, involved in the regulation of the intracellular balance of NAD and NADP, and is a key enzyme in the biosynthesis of NADP. Catalyzes specifically the phosphorylation on 2'-hydroxyl of the adenosine moiety of NAD to yield NADP. The sequence is that of NAD kinase from Streptococcus pneumoniae (strain 70585).